The chain runs to 99 residues: Aspartyl/glutamyl-tRNA(Asn/Gln) amidotransferase subunit C (99 aa).

Belongs to the GatC family. Heterotrimer of A, B and C subunits.

It carries out the reaction L-glutamyl-tRNA(Gln) + L-glutamine + ATP + H2O = L-glutaminyl-tRNA(Gln) + L-glutamate + ADP + phosphate + H(+). The catalysed reaction is L-aspartyl-tRNA(Asn) + L-glutamine + ATP + H2O = L-asparaginyl-tRNA(Asn) + L-glutamate + ADP + phosphate + 2 H(+). Allows the formation of correctly charged Asn-tRNA(Asn) or Gln-tRNA(Gln) through the transamidation of misacylated Asp-tRNA(Asn) or Glu-tRNA(Gln) in organisms which lack either or both of asparaginyl-tRNA or glutaminyl-tRNA synthetases. The reaction takes place in the presence of glutamine and ATP through an activated phospho-Asp-tRNA(Asn) or phospho-Glu-tRNA(Gln). The chain is Aspartyl/glutamyl-tRNA(Asn/Gln) amidotransferase subunit C from Paracidovorax citrulli (strain AAC00-1) (Acidovorax citrulli).